The primary structure comprises 61 residues: Metallothionein-2B (61 aa).

Met1 carries the post-translational modification N-acetylmethionine. Positions Met1–Cys29 are beta. Residues Cys5, Cys7, Cys13, Cys15, Cys19, Cys21, Cys24, Cys26, Cys29, Cys33, Cys34, Cys36, Cys37, Cys41, Cys44, Cys48, Cys50, Cys57, Cys59, and Cys60 each contribute to the a divalent metal cation site. An alpha region spans residues Lys30 to Ala61.

Belongs to the metallothionein superfamily. Type 1 family. In terms of assembly, monomer.

Its function is as follows. Metallothioneins have a high content of cysteine residues that bind various heavy metals; these proteins are transcriptionally regulated by both heavy metals and glucocorticoids. This chain is Metallothionein-2B (MT2B), found in Sus scrofa (Pig).